A 340-amino-acid chain; its full sequence is Eukaryotic translation initiation factor 3 subunit I (340 aa).

5 WD repeats span residues 8-47, 50-91, 150-189, 194-233, and 291-330; these read GHER…RLGT, GHQG…KVWD, CTES…QLEN, EFDH…ILKT, and GHFG…FDFM.

The protein belongs to the eIF-3 subunit I family. In terms of assembly, component of the eukaryotic translation initiation factor 3 (eIF-3) complex.

The protein resides in the cytoplasm. Component of the eukaryotic translation initiation factor 3 (eIF-3) complex, which is involved in protein synthesis of a specialized repertoire of mRNAs and, together with other initiation factors, stimulates binding of mRNA and methionyl-tRNAi to the 40S ribosome. The eIF-3 complex specifically targets and initiates translation of a subset of mRNAs involved in cell proliferation. The chain is Eukaryotic translation initiation factor 3 subunit I (tif34) from Aspergillus fumigatus (strain CBS 144.89 / FGSC A1163 / CEA10) (Neosartorya fumigata).